The following is a 128-amino-acid chain: Glycine cleavage system H protein (128 aa).

The Lipoyl-binding domain occupies 22-104; it reads AIVVGITDFA…YEEGWMITIE (83 aa). N6-lipoyllysine is present on lysine 63.

This sequence belongs to the GcvH family. The glycine cleavage system is composed of four proteins: P, T, L and H. Requires (R)-lipoate as cofactor.

In terms of biological role, the glycine cleavage system catalyzes the degradation of glycine. The H protein shuttles the methylamine group of glycine from the P protein to the T protein. The protein is Glycine cleavage system H protein of Anaeromyxobacter dehalogenans (strain 2CP-1 / ATCC BAA-258).